The sequence spans 664 residues: Bifunctional polymyxin resistance protein ArnA (664 aa).

The interval 1 to 308 (MSTKAVVFAY…EFGLVAGSQM (308 aa)) is formyltransferase ArnAFT. Catalysis depends on histidine 106, which acts as the Proton donor; for formyltransferase activity. (6R)-10-formyltetrahydrofolate is bound by residues arginine 116 and 138–142 (VKRAD). Positions 318 to 664 (RRTRVLILGV…EAMAEKADQC (347 aa)) are dehydrogenase ArnADH. NAD(+) is bound by residues aspartate 351 and 372-373 (DI). Residues alanine 397, tyrosine 402, and 436-437 (TS) contribute to the UDP-alpha-D-glucuronate site. Glutamate 438 functions as the Proton acceptor; for decarboxylase activity in the catalytic mechanism. Residues arginine 464, asparagine 495, 529-538 (RLVDGGAQKR), and tyrosine 616 contribute to the UDP-alpha-D-glucuronate site. The active-site Proton donor; for decarboxylase activity is the arginine 622.

The protein in the N-terminal section; belongs to the Fmt family. UDP-L-Ara4N formyltransferase subfamily. This sequence in the C-terminal section; belongs to the NAD(P)-dependent epimerase/dehydratase family. UDP-glucuronic acid decarboxylase subfamily. As to quaternary structure, homohexamer, formed by a dimer of trimers.

It carries out the reaction UDP-alpha-D-glucuronate + NAD(+) = UDP-beta-L-threo-pentopyranos-4-ulose + CO2 + NADH. The enzyme catalyses UDP-4-amino-4-deoxy-beta-L-arabinose + (6R)-10-formyltetrahydrofolate = UDP-4-deoxy-4-formamido-beta-L-arabinose + (6S)-5,6,7,8-tetrahydrofolate + H(+). The protein operates within nucleotide-sugar biosynthesis; UDP-4-deoxy-4-formamido-beta-L-arabinose biosynthesis; UDP-4-deoxy-4-formamido-beta-L-arabinose from UDP-alpha-D-glucuronate: step 1/3. It participates in nucleotide-sugar biosynthesis; UDP-4-deoxy-4-formamido-beta-L-arabinose biosynthesis; UDP-4-deoxy-4-formamido-beta-L-arabinose from UDP-alpha-D-glucuronate: step 3/3. It functions in the pathway bacterial outer membrane biogenesis; lipopolysaccharide biosynthesis. Its function is as follows. Bifunctional enzyme that catalyzes the oxidative decarboxylation of UDP-glucuronic acid (UDP-GlcUA) to UDP-4-keto-arabinose (UDP-Ara4O) and the addition of a formyl group to UDP-4-amino-4-deoxy-L-arabinose (UDP-L-Ara4N) to form UDP-L-4-formamido-arabinose (UDP-L-Ara4FN). The modified arabinose is attached to lipid A and is required for resistance to polymyxin and cationic antimicrobial peptides. This Pseudomonas syringae pv. syringae (strain B728a) protein is Bifunctional polymyxin resistance protein ArnA.